Reading from the N-terminus, the 3033-residue chain is MSTNPKPQRKTKRNTNRRPQDVKFPGGGQIVGGVYLLPRRGPRLGVRATRKTSERSQPRGRRQPIPKDRRSTGKSWGKPGYPWPLYGNEGCGWAGWLLSPRGSRPTWGPSDPRHRSRNLGRVIDTITCGFADLMGYIPVVGAPVGGVARALAHGVRVLEDGINYATRNLPGCSFSIFLLALLSCVTVPVSSVEIRNISTSYYATNDCSNNSITWQLTNAVLHLPGCVPCENDNGTLRCWIQVTPNVAVKHRGALTHNLRAHVDVIVMAATVCSALYVGDVCGAVMIVSQALIVSPERHNFTQECNCSIYQGHITGQRMAWDMMLNWSPTLTMILAYAARVPELVLEIVFGGHWGVVFGLAYFSMQGAWAKVIAILLLVAGVDATTYSTGATVGRTVGSFAGLFKLGAQQNVQLINTNGSWHINRTALNCNDSLHTGFMAALFYANKFNSSGCPERLSSCRGLDDFRIGWGTLEYETNVTNVEDMRPYCWHYPPKPCGIVPAQSVCGPVYCFTPSPVVVGTTDRQGVPTYNWGDNETDVFLLNSTRPPRGAWFGCTWMNGTGFTKTCGAPPCRIRKDFNSTLDLLCPTDCFRKHPDATYVKCGAGPWLTPRCLIDYPYRLWHYPCTVNFTIFKVRMYVGGVEHRFSAACNFTRGDRCRLEDRDRGQQSPLLHSTTEWAVLPCSFSDLPALSTGLLHLHQNIVDVQYLYGLSPAVTKYIVKWEWVVLLFLLLADARICACLWMLIILGQAEAALEKLIILHSASAASANGPLWFFIFFTAAWYLKGRVVPAATYSVLGLWSFLLLVLALPQQAYALDAAEQGELGLVILMIISIFTLTPAYKILLSRSVWWLSYMLVLAEAQVQQWVPPLEARGGRDGIIWVAVILHPHLVFEVTKWLLAILGSAYLLKASLLRVPYFVRAHALLRVCTLVRHLAGARYIQMLLITMGRWTGTYIYDHLSPLSTWAAQGLRDLAVAVEPVVFSPMEKKVIVWGAETVACGDILHGLPVSARLGREVLLGPADGYTSKGWKLLAPITAYTQQTRGLLGAIVVSLTGRDKNEQAGQVQVLSSVTQSFLGTSISGVLWTVYHGAGNKTLASPRGPVTQMYTSAEGDLVGWPSPPGTKSLDPCTCGAVDLYLVTRNADVIPVRRKDDRRGALLSPRPLSTLKGSSGGPVLCPRGHAVGLFRAAVCARGVAKSIDFIPVESLDIARRTPSFSDNSTPPAVPQTYQVGYLHAPTGSGKSTKVPAAYTSQGYKVLVLNPSVAATLGFGAYMSKAHGINPNIRTGVRTVTTGDSITYSTYGKFLADGGCSAGAYDIIICDECHSVDATTILGIGTVLDQAETAGVRLVVLATATPPGTVTTPHANIEEVALGHEGEIPFYGKAIPLASIKGGRHLIFCHSKKKCDELAAALRGMGVNAVAYYRGLDVSVIPTQGDVVVVATDALMTGYTGDFDSVIDCNVAVTQIVDFSLDPTFTITTQTVPQDAVSRSQRRGRTGRGRLGTYRYVSSGERPSGMFDSVVLCECYDAGAAWYELTPAETTVRLRAYFNTPGLPVCQDHLEFWEAVFTGLTHIDAHFLSQTKQGGDNFAYLTAYQATVCARAKAPPPSWDVMWKCLTRLKPTLTGPTPLLYRLGAVTNEITLTHPVTKYIATCMQADLEVMTSTWVLAGGVLAAVAAYCLATGCISIIGRIHLNDQVVVAPDKEILYEAFDEMEECASKAALIEEGQRMAEMLKSKILGLLQQATKQAQDIQPAMQSSWPKIEQFWARHMWNFISGIQYLAGLSTLPGNPAVASMMAFSAALTSPLPTSTTILLNIMGGWLASQIAPPAGATGFVVSGLVGAAVGSIGLGKILVDVLAGYGAGISGALVAFKIMSGEKPSVEDVVNLLPAILSPGALVVGVICAAILRRHVGQGEGAVQWMNRLIAFASRGNHVAPTHYVAESDASLRVTQVLSSLTITSLLRRLHAWITEDCPVPCSGSWLRDIWEWVCSILTDFKNWLSAKLLPKMPGLPFISCQKGYRGVWAGTGVMTTRCSCGANISGHVRLGTMKITGPKTCLNMWQGTFPINCYTEGPCVPKPPPNYKTAIWRVAASEYVEVTQHGSFSYVTGLTSDNLKVPCQVPAPEFFSWVDGVQIHRFAPTPGPFFRDEVTFTVGLNSLVVGSQLPCDPEPDTEVLASMLTDPSHITAETAARRLARGSPPSQASSSASQLSAPSLKATCTTHKTAYDCDMVDANLFMGGDVTRIESDSKVIVLDSLDSMTEVEDDREPSVPSEYLTRRRKFPPALPPWARPDYNPPVIETWKRPDYEPPTVLGCALPPTPQAPVPPPRRRRARVLTQDNVEGVLREMADKVLSPLQDTNDSGHSTGADTGGDSVQQPSGETAASDAGSLSSMPPLEGEPGDPDLEFEPARSAPPSEGECEVIDSDSKSWSTVSDQEDSVICCSMSYSWTGALITPCGPEEEKLPISPLSNSLMRFHNKVYSTTSRSASLRAKKVTFDRVQVLDAHYDSVLQDVKRAASKVSARLLSVEEACALTPPHSAKSRYGFGAKEVRSLSRGAVNHIRSVWEDLLEDQHTPIDTTAMAKNEVFCIDPAKGGKKPARLIVYPDLGVRVCEKMALYDIAQKLPKAIMGPSYGFQYSPAERVDFLLKAWGSKKDPMGFSYDTRCFDSTVTERDIRTEESIYQACSLPQEARTVIHSITERLYVGGPMTNSKGQSCGYRRCRASGVFTTSMGNTMTCYIKALAACKAAGIVDPTMLVCGDDLVVISESQGNEEDERNLRAFTEAMTRYSAPPGDLPRPEYDLELITSCSSNVSVALDSRGRRRYFLTRDPTTPITRAAWETVRHSPVNSWLGNIIQYAPTIWVRMVIMTHFFSILLAQDTLNQNLNFEMYGAVYSVNPLDLPAIIERLHGLDAFSLHTYSPHELSRVAATLRKLGAPPLRAWKSRARAVRASLIIQGGRAATCGRYLFNWAVKTKLKLTPLPEASRLDLSGWFTVGAGGGDIFHSVSHARPRLLLLCLLLLSVGVGIFLLPAR.

The residue at position 2 (Ser2) is an N-acetylserine; by host. Residues 2 to 23 form an interaction with STAT1 region; it reads STNPKPQRKTKRNTNRRPQDVK. The interaction with EIF2AK2/PKR stretch occupies residues 2 to 58; sequence STNPKPQRKTKRNTNRRPQDVKFPGGGQIVGGVYLLPRRGPRLGVRATRKTSERSQP. Positions 2–59 are interaction with DDX3X; sequence STNPKPQRKTKRNTNRRPQDVKFPGGGQIVGGVYLLPRRGPRLGVRATRKTSERSQPR. The interval 2–75 is disordered; that stretch reads STNPKPQRKT…PKDRRSTGKS (74 aa). Short sequence motifs (nuclear localization signal) lie at residues 5-13 and 38-43; these read PKPQRKTKR and PRRGPR. Positions 7-16 are enriched in basic residues; it reads PQRKTKRNTN. Over residues 32–47 the composition is skewed to low complexity; that stretch reads GGVYLLPRRGPRLGVR. Ser53 is subject to Phosphoserine; by host. Short sequence motifs (nuclear localization signal) lie at residues 58–64 and 66–71; these read PRGRRQP and PKDRRS. 2 positions are modified to phosphoserine; by host: Ser99 and Ser116. The tract at residues 112–152 is important for endoplasmic reticulum and mitochondrial localization; sequence PRHRSRNLGRVIDTITCGFADLMGYIPVVGAPVGGVARALA. The interval 122-173 is interaction with APOA2; the sequence is VIDTITCGFADLMGYIPVVGAPVGGVARALAHGVRVLEDGINYATRNLPGCS. The tract at residues 164–167 is important for lipid droplets localization; the sequence is YATR. Positions 178–191 are cleaved as a propeptide — ER anchor for the core protein, removed in mature form by host signal peptidase; that stretch reads LLALLSCVTVPVSS. Residues 190 to 358 lie on the Lumenal side of the membrane; that stretch reads SSVEIRNIST…FGGHWGVVFG (169 aa). Residues Asn196 and Asn209 are each glycosylated (N-linked (GlcNAc...) asparagine; by host). The tract at residues 265–296 is important for fusion; that stretch reads IVMAATVCSALYVGDVCGAVMIVSQALIVSPE. Residue Asn305 is glycosylated (N-linked (GlcNAc...) asparagine; by host). The helical transmembrane segment at 359–379 threads the bilayer; that stretch reads LAYFSMQGAWAKVIAILLLVA. Residues 380 to 729 are Lumenal-facing; it reads GVDATTYSTG…WEWVVLLFLL (350 aa). The tract at residues 385 to 412 is HVR1; that stretch reads TYSTGATVGRTVGSFAGLFKLGAQQNVQ. N-linked (GlcNAc...) (high mannose) asparagine; by host glycans are attached at residues Asn417, Asn423, and Asn430. Cystine bridges form between Cys429–Cys554, Cys452–Cys459, Cys488–Cys496, and Cys505–Cys510. Asn448 is a glycosylation site (N-linked (GlcNAc...) asparagine; by host). Residues 475–480 form an HVR2 region; sequence ETNVTN. N-linked (GlcNAc...) asparagine; by host glycosylation occurs at Asn477. The interval 482–495 is CD81-binding 1; it reads EDMRPYCWHYPPKP. The N-linked (GlcNAc...) asparagine; by host glycan is linked to Asn534. The CD81-binding 2 stretch occupies residues 546–553; sequence PPRGAWFG. Residue Asn558 is glycosylated (N-linked (GlcNAc...) asparagine; by host). Cystine bridges form between Cys566/Cys571, Cys585/Cys589, Cys601/Cys624, and Cys611/Cys648. Residues Asn627 and Asn649 are each glycosylated (N-linked (GlcNAc...) (high mannose) asparagine; by host). Cys656 and Cys681 form a disulfide bridge. The segment at 664 to 675 is PKR/eIF2-alpha phosphorylation homology domain (PePHD); sequence GQQSPLLHSTTE. A helical transmembrane segment spans residues 730-750; the sequence is LADARICACLWMLIILGQAEA. Residues 751–761 lie on the Lumenal side of the membrane; sequence ALEKLIILHSA. Residues 762-782 form a helical membrane-spanning segment; sequence SAASANGPLWFFIFFTAAWYL. The Cytoplasmic segment spans residues 783–786; sequence KGRV. A helical transmembrane segment spans residues 787–807; it reads VPAATYSVLGLWSFLLLVLAL. Topologically, residues 808–817 are lumenal; sequence PQQAYALDAA. A helical transmembrane segment spans residues 818–838; the sequence is EQGELGLVILMIISIFTLTPA. Over 839–885 the chain is Cytoplasmic; the sequence is YKILLSRSVWWLSYMLVLAEAQVQQWVPPLEARGGRDGIIWVAVILH. A helical transmembrane segment spans residues 886–906; the sequence is PHLVFEVTKWLLAILGSAYLL. Residues 907–932 are Lumenal-facing; that stretch reads KASLLRVPYFVRAHALLRVCTLVRHL. The Peptidase C18 domain occupies 907–1030; that stretch reads KASLLRVPYF…GYTSKGWKLL (124 aa). A protease NS2-3 region spans residues 908–1210; that stretch reads ASLLRVPYFV…PVESLDIARR (303 aa). A lipid anchor (S-palmitoyl cysteine; by host) is attached at Cys926. The chain crosses the membrane as a helical span at residues 933-953; sequence AGARYIQMLLITMGRWTGTYI. Positions 933–953 are interaction with host SCPS1; it reads AGARYIQMLLITMGRWTGTYI. The Cytoplasmic portion of the chain corresponds to 954–1661; sequence YDHLSPLSTW…CMQADLEVMT (708 aa). Catalysis depends on for protease NS2 activity; shared with dimeric partner residues His956, Glu976, and Cys997. The region spanning 1031–1212 is the Peptidase S29 domain; sequence APITAYTQQT…ESLDIARRTP (182 aa). Catalysis depends on charge relay system; for serine protease NS3 activity residues His1087 and Asp1111. The Zn(2+) site is built by Cys1127 and Cys1129. The active-site Charge relay system; for serine protease NS3 activity is Ser1169. Residues Cys1175 and His1179 each contribute to the Zn(2+) site. Residues 1221–1373 form the Helicase ATP-binding domain; that stretch reads PAVPQTYQVG…ANIEEVALGH (153 aa). 1234 to 1241 provides a ligand contact to ATP; it reads APTGSGKS. Mg(2+) contacts are provided by Ser1241 and Glu1321. The DECH box signature appears at 1320–1323; it reads DECH. The segment at 1490–1502 is RNA-binding; that stretch reads QRRGRTGRGRLGT. The chain crosses the membrane as a helical span at residues 1662-1682; that stretch reads STWVLAGGVLAAVAAYCLATG. Positions 1683–1694 are NS3-binding; that stretch reads CISIIGRIHLND. The Cytoplasmic segment spans residues 1683–1809; that stretch reads CISIIGRIHL…ALTSPLPTST (127 aa). The chain crosses the membrane as a helical span at residues 1810 to 1830; sequence TILLNIMGGWLASQIAPPAGA. Topologically, residues 1831-1832 are lumenal; it reads TG. Residues 1833–1853 traverse the membrane as a helical segment; that stretch reads FVVSGLVGAAVGSIGLGKILV. A topological domain (cytoplasmic) is located at residue Asp1854. The chain crosses the membrane as a helical span at residues 1855–1875; sequence VLAGYGAGISGALVAFKIMSG. Topologically, residues 1876 to 1885 are lumenal; it reads EKPSVEDVVN. A helical membrane pass occupies residues 1886–1906; the sequence is LLPAILSPGALVVGVICAAIL. Topologically, residues 1907-1976 are cytoplasmic; sequence RRHVGQGEGA…WITEDCPVPC (70 aa). The S-palmitoyl cysteine; by host moiety is linked to residue Cys1976. The stretch at 1977–2007 is an intramembrane region; the sequence is SGSWLRDIWEWVCSILTDFKNWLSAKLLPKM. Residues 2008–3012 are Cytoplasmic-facing; sequence PGLPFISCQK…FHSVSHARPR (1005 aa). Zn(2+) is bound by residues Cys2015, Cys2033, Cys2035, and Cys2056. The FKBP8-binding stretch occupies residues 2124–2212; that stretch reads EFFSWVDGVQ…ASSSASQLSA (89 aa). Positions 2124–2332 are transcriptional activation; sequence EFFSWVDGVQ…PVPPPRRRRA (209 aa). Residues 2139–2143 form an interaction with non-structural protein 4A region; that stretch reads PTPGP. Residues 2192-2213 form a disordered region; it reads RRLARGSPPSQASSSASQLSAP. The tract at residues 2193–2460 is interaction with host SKP2; it reads RLARGSPPSQ…ALITPCGPEE (268 aa). 6 positions are modified to phosphoserine; by host: Ser2198, Ser2201, Ser2205, Ser2208, Ser2211, and Ser2214. Residues 2198–2213 show a composition bias toward low complexity; that stretch reads SPPSQASSSASQLSAP. The ISDR stretch occupies residues 2214–2249; it reads SLKATCTTHKTAYDCDMVDANLFMGGDVTRIESDSK. The tract at residues 2214 to 2275 is interaction with EIF2AK2/PKR; sequence SLKATCTTHK…REPSVPSEYL (62 aa). Residues 2249-2306 are NS4B-binding; the sequence is KVIVLDSLDSMTEVEDDREPSVPSEYLTRRRKFPPALPPWARPDYNPPVIETWKRPDY. Residues 2299 to 2377 are V3; sequence ETWKRPDYEP…DTGGDSVQQP (79 aa). Residues 2322–2325 carry the SH3-binding motif; it reads APVP. A Nuclear localization signal motif is present at residues 2327-2335; the sequence is PRRRRARVL. A Glycyl lysine isopeptide (Lys-Gly) (interchain with G-Cter in ubiquitin) cross-link involves residue Lys2350. The disordered stretch occupies residues 2354–2431; sequence PLQDTNDSGH…IDSDSKSWST (78 aa). Positions 2355–2391 are enriched in polar residues; that stretch reads LQDTNDSGHSTGADTGGDSVQQPSGETAASDAGSLSS. Residues Ser2471 and Ser2484 each carry the phosphoserine; by host modification. Residues 2656 to 2774 enclose the RdRp catalytic domain; that stretch reads PMGFSYDTRC…ISESQGNEED (119 aa). Residues Asp2662, Asp2760, and Asp2761 each coordinate Mg(2+). A helical transmembrane segment spans residues 3013 to 3033; the sequence is LLLLCLLLLSVGVGIFLLPAR.

Belongs to the hepacivirus polyprotein family. In terms of assembly, homooligomer. Interacts with E1 (via C-terminus). Interacts with the non-structural protein 5A. Interacts (via N-terminus) with host STAT1 (via SH2 domain); this interaction results in decreased STAT1 phosphorylation and ubiquitin-mediated proteasome-dependent STAT1 degradation, leading to decreased IFN-stimulated gene transcription. Interacts with host STAT3; this interaction constitutively activates STAT3. Interacts with host LTBR receptor. Interacts with host TNFRSF1A receptor and possibly induces apoptosis. Interacts with host HNRPK. Interacts with host YWHAE. Interacts with host UBE3A/E6AP. Interacts with host DDX3X. Interacts with host APOA2. Interacts with host RXRA protein. Interacts with host SP110 isoform 3/Sp110b; this interaction sequesters the transcriptional corepressor SP110 away from the nucleus. Interacts with host CREB3 nuclear transcription protein; this interaction triggers cell transformation. Interacts with host ACY3. Interacts with host C1QR1. Interacts with host RBM24; this interaction, which enhances the interaction of the mature core protein with 5'-UTR, may inhibit viral translation and favor replication. Interacts with host EIF2AK2/PKR; this interaction induces the autophosphorylation of EIF2AK2. Part of the viral assembly initiation complex composed of NS2, E1, E2, NS3, NS4A, NS5A and the mature core protein. Forms a heterodimer with envelope glycoprotein E2. Interacts with mature core protein. Interacts with protease NS2. The heterodimer E1/E2 interacts with host CLDN1; this interaction plays a role in viral entry into host cell. Interacts with host SPSB2 (via C-terminus). Part of the viral assembly initiation complex composed of NS2, E1, E2, NS3, NS4A, NS5A and the mature core protein. Interacts with host NEURL3; this interaction prevents E1 binding to glycoprotein E2. As to quaternary structure, forms a heterodimer with envelope glycoprotein E1. Interacts with host CD81 and SCARB1 receptors; these interactions play a role in viral entry into host cell. Interacts with host EIF2AK2/PKR; this interaction inhibits EIF2AK2 and probably allows the virus to evade the innate immune response. Interacts with host CD209/DC-SIGN and CLEC4M/DC-SIGNR. Interact with host SPCS1; this interaction is essential for viral particle assembly. Interacts with protease NS2. The heterodimer E1/E2 interacts with host CLDN1; this interaction plays a role in viral entry into host cell. Part of the viral assembly initiation complex composed of NS2, E1, E2, NS3, NS4A, NS5A and the mature core protein. Interacts with host SLC3A2/4F2hc; the interaction may facilitate viral entry into host cell. Interacts with human PLSCR1. In terms of assembly, homohexamer. Homoheptamer. Interacts with protease NS2. Homodimer. Interacts with host SPCS1; this interaction is essential for viral particle assembly. Interacts with envelope glycoprotein E1. Interacts with envelope glycoprotein E2. Interacts with viroporin p7. Interacts with serine protease/helicase NS3. Part of the replication complex composed of NS2, NS3, NS4A, NS4B, NS5A and the RNA-directed RNA polymerase embedded in an ER-derived membranous web. Part of the viral assembly initiation complex composed of NS2, E1, E2, NS3, NS4A, NS5A and the mature core protein. As to quaternary structure, interacts with protease NS2. Interacts with non-structural protein 4A; this interaction stabilizes the folding of NS3 serine protease. NS3-NS4A interaction is essential for NS3 activation and allows membrane anchorage of the latter. NS3/NS4A complex also prevents phosphorylation of host IRF3, thus preventing the establishment of dsRNA induced antiviral state. Interacts with host MAVS; this interaction leads to the cleavage and inhibition of host MAVS. Interacts with host TICAM1; this interaction leads to the cleavage and inhibition of host TICAM1. Interacts with host TANK-binding kinase/TBK1; this interaction results in the inhibition of the association between TBK1 and IRF3, which leads to the inhibition of IRF3 activation. Interacts with host RBM24. Part of the replication complex composed of NS2, NS3, NS4A, NS4B, NS5A and the RNA-directed RNA polymerase embedded in an ER-derived membranous web. Part of the viral assembly initiation complex composed of NS2, E1, E2, NS3, NS4A, NS5A and the mature core protein. In terms of assembly, interacts with NS3 serine protease; this interaction stabilizes the folding of NS3 serine protease. NS3-NS4A interaction is essential for NS3 activation and allows membrane anchorage of the latter. Interacts with non-structural protein 5A (via N-terminus). Part of the replication complex composed of NS2, NS3, NS4A, NS4B, NS5A and the RNA-directed RNA polymerase embedded in an ER-derived membranous web. Part of the viral assembly initiation complex composed of NS2, E1, E2, NS3, NS4A, NS5A and the mature core protein. Homomultimer. Interacts with non-structural protein NS5A. Interacts with host PLA2G4C; this interaction likely initiates the recruitment of replication complexes to lipid droplets. Interacts with host STING; this interaction disrupts the interaction between STING and TBK1 thereby suppressing the interferon signaling. Part of the replication complex composed of NS2, NS3, NS4A, NS4B, NS5A and the RNA-directed RNA polymerase embedded in an ER-derived membranous web. As to quaternary structure, monomer. Homodimer; dimerization is required for RNA-binding. Interacts with the mature core protein. Interacts (via N-terminus) with non-structural protein 4A. Interacts with non-structural protein 4B. Interacts (via region D2) with RNA-directed RNA polymerase. Part of the viral assembly initiation complex composed of NS2, E1, E2, NS3, NS4A, NS5A and the mature core protein. Part of the replication complex composed of NS2, NS3, NS4A, NS4B, NS5A and the RNA-directed RNA polymerase embedded in an ER-derived membranous web. Interacts with host GRB2. Interacts with host BIN1. Interacts with host PIK3R1. Interacts with host SRCAP. Interacts with host FKBP8. Interacts (via C-terminus) with host VAPB (via MSP domain). Interacts with host EIF2AK2/PKR; this interaction leads to disruption of EIF2AK2 dimerization by NS5A and probably allows the virus to evade the innate immune response. Interacts (via N-terminus) with host PACSIN2 (via N-terminus); this interaction attenuates protein kinase C alpha-mediated phosphorylation of PACSIN2 by disrupting the interaction between PACSIN2 and PRKCA. Interacts (via N-terminus) with host SRC kinase (via SH2 domain). Interacts with most Src-family kinases. Interacts with host IFI27 and SKP2; promotes the ubiquitin-mediated proteasomal degradation of NS5A. Interacts with host GPS2. Interacts with host TNFRSF21; this interaction allows the modulation by the virus of JNK, p38 MAPK, STAT3, and Akt signaling pathways in a DR6-dependent manner. Interacts (via N-terminus) with host CIDEB (via N-terminus); this interaction seems to regulate the association of HCV particles with APOE. Interacts with host CHKA/Choline Kinase-alpha; CHKA bridges host PI4KA and NS5A and potentiates NS5A-stimulated PI4KA activity, which then facilitates the targeting of the ternary complex to the ER for viral replication. Interacts with host SPSB2 (via C-terminus); this interaction targets NS5A for ubiquitination and degradation. Interacts with host RAB18; this interaction may promote the association of NS5A and other replicase components with lipid droplets. Interacts (via region D2) with host PPIA/CYPA; the interaction stimulates RNA-binding ability of NS5A and is dependent on the peptidyl-prolyl cis-trans isomerase activity of PPIA/CYPA. Interacts with host TRIM14; this interaction induces the degradation of NS5A. In terms of assembly, homooligomer. Interacts with non-structural protein 5A. Interacts with host VAPB. Interacts with host PRK2/PKN2. Interacts with host HNRNPA1 and SEPT6; these interactions facilitate viral replication. Part of the replication complex composed of NS2, NS3, NS4A, NS4B, NS5A and the RNA-directed RNA polymerase. Zn(2+) serves as cofactor. The cofactor is Mg(2+). Specific enzymatic cleavages in vivo yield mature proteins. The structural proteins, core, E1, E2 and p7 are produced by proteolytic processing by host signal peptidases. The core protein precursor is synthesized as a 23 kDa, which is retained in the ER membrane through the hydrophobic signal peptide. Cleavage by the signal peptidase releases the 21 kDa mature core protein. The cleavage of the core protein precursor occurs between aminoacids 176 and 188 but the exact cleavage site is not known. Some degraded forms of the core protein appear as well during the course of infection. The other proteins (p7, NS2, NS3, NS4A, NS4B, NS5A and NS5B) are cleaved by the viral proteases. Autoprocessing between NS2 and NS3 is mediated by the NS2 cysteine protease catalytic domain and regulated by the NS3 N-terminal domain. Post-translationally, phosphorylated by host PKC and PKA. In terms of processing, ubiquitinated; mediated by UBE3A and leading to core protein subsequent proteasomal degradation. Highly N-glycosylated. Post-translationally, palmitoylation is required for NS2/3 autoprocessing and E2 recruitment to membranes. In terms of processing, palmitoylated. This modification may play a role in its polymerization or in protein-protein interactions. Phosphorylated on serines in a basal form termed p56. p58 is a hyperphosphorylated form of p56. p56 and p58 coexist in the cell in roughly equivalent amounts. Hyperphosphorylation is dependent on the presence of NS4A. Host CSNK1A1/CKI-alpha or RPS6KB1 kinases may be responsible for NS5A phosphorylation. Post-translationally, tyrosine phosphorylation is essential for the interaction with host SRC. In terms of processing, ubiquitinated. Ubiquitination, most probably at Lys-2350, mediated by host IFI27 and SKP2 leads to proteasomal degradation, restricting viral infection. Ubiquitination by host TRIM22 leads to interruption of viral replication. The N-terminus is phosphorylated by host PRK2/PKN2.

It is found in the host endoplasmic reticulum membrane. Its subcellular location is the host mitochondrion membrane. The protein localises to the virion. It localises to the host cytoplasm. The protein resides in the host nucleus. It is found in the host lipid droplet. Its subcellular location is the virion membrane. The protein localises to the host mitochondrion. It localises to the host cell membrane. The protein resides in the host perinuclear region. It catalyses the reaction Hydrolysis of four peptide bonds in the viral precursor polyprotein, commonly with Asp or Glu in the P6 position, Cys or Thr in P1 and Ser or Ala in P1'.. It carries out the reaction a ribonucleoside 5'-triphosphate + H2O = a ribonucleoside 5'-diphosphate + phosphate + H(+). The catalysed reaction is ATP + H2O = ADP + phosphate + H(+). The enzyme catalyses RNA(n) + a ribonucleoside 5'-triphosphate = RNA(n+1) + diphosphate. Its activity is regulated as follows. Inhibited by the antiviral drug hexamethylene amiloride. Inhibition by amantadine appears to be genotype-dependent. Also inhibited by long-alkyl-chain iminosugar derivatives. With respect to regulation, activity is up-regulated by PRK2/PKN2-mediated phosphorylation. Its function is as follows. Packages viral RNA to form a viral nucleocapsid, and promotes virion budding. Participates in the viral particle production as a result of its interaction with the non-structural protein 5A. Binds RNA and may function as a RNA chaperone to induce the RNA structural rearrangements taking place during virus replication. Modulates viral translation initiation by interacting with viral IRES and 40S ribosomal subunit. Affects various cell signaling pathways, host immunity and lipid metabolism. Prevents the establishment of cellular antiviral state by blocking the interferon-alpha/beta (IFN-alpha/beta) and IFN-gamma signaling pathways and by blocking the formation of phosphorylated STAT1 and promoting ubiquitin-mediated proteasome-dependent degradation of STAT1. Activates STAT3 leading to cellular transformation. Regulates the activity of cellular genes, including c-myc and c-fos. May repress the promoter of p53, and sequester CREB3 and SP110 isoform 3/Sp110b in the cytoplasm. Represses cell cycle negative regulating factor CDKN1A, thereby interrupting an important check point of normal cell cycle regulation. Targets transcription factors involved in the regulation of inflammatory responses and in the immune response: suppresses TNF-induced NF-kappa-B activation, and activates AP-1. Binds to dendritic cells (DCs) via C1QR1, resulting in down-regulation of T-lymphocytes proliferation. Alters lipid metabolism by interacting with hepatocellular proteins involved in lipid accumulation and storage. Induces up-regulation of FAS promoter activity, and thereby contributes to the increased triglyceride accumulation in hepatocytes (steatosis). In terms of biological role, forms a heterodimer with envelope glycoprotein E2, which mediates virus attachment to the host cell, virion internalization through clathrin-dependent endocytosis and fusion with host membrane. Fusion with the host cell is most likely mediated by both E1 and E2, through conformational rearrangements of the heterodimer required for fusion rather than a classical class II fusion mechanism. E1/E2 heterodimer binds host apolipoproteins such as APOB and ApoE thereby forming a lipo-viro-particle (LVP). APOE associated to the LVP allows the initial virus attachment to cell surface receptors such as the heparan sulfate proteoglycans (HSPGs), syndecan-1 (SDC1), syndecan-1 (SDC2), the low-density lipoprotein receptor (LDLR) and scavenger receptor class B type I (SCARB1). The cholesterol transfer activity of SCARB1 allows E2 exposure and binding of E2 to SCARB1 and the tetraspanin CD81. E1/E2 heterodimer binding on CD81 activates the epithelial growth factor receptor (EGFR) signaling pathway. Diffusion of the complex E1-E2-EGFR-SCARB1-CD81 to the cell lateral membrane allows further interaction with Claudin 1 (CLDN1) and occludin (OCLN) to finally trigger HCV entry. Functionally, forms a heterodimer with envelope glycoprotein E1, which mediates virus attachment to the host cell, virion internalization through clathrin-dependent endocytosis and fusion with host membrane. Fusion with the host cell is most likely mediated by both E1 and E2, through conformational rearrangements of the heterodimer required for fusion rather than a classical class II fusion mechanism. The interaction between envelope glycoprotein E2 and host apolipoprotein E/APOE allows the proper assembly, maturation and infectivity of the viral particles. This interaction is probably promoted via the up-regulation of cellular autophagy by the virus. E1/E2 heterodimer binds host apolipoproteins such as APOB and APOE thereby forming a lipo-viro-particle (LVP). APOE associated to the LVP allows the initial virus attachment to cell surface receptors such as the heparan sulfate proteoglycans (HSPGs), syndecan-1 (SDC1), syndecan-1 (SDC2), the low-density lipoprotein receptor (LDLR) and scavenger receptor class B type I (SCARB1). The cholesterol transfer activity of SCARB1 allows E2 exposure and binding of E2 to SCARB1 and the tetraspanin CD81. E1/E2 heterodimer binding on CD81 activates the epithelial growth factor receptor (EGFR) signaling pathway. Diffusion of the complex E1-E2-EGFR-SCARB1-CD81 to the cell lateral membrane allows further interaction with Claudin 1 (CLDN1) and occludin (OCLN) to finally trigger HCV entry. Inhibits host EIF2AK2/PKR activation, preventing the establishment of an antiviral state. Viral ligand for CD209/DC-SIGN and CLEC4M/DC-SIGNR, which are respectively found on dendritic cells (DCs), and on liver sinusoidal endothelial cells and macrophage-like cells of lymph node sinuses. These interactions allow the capture of circulating HCV particles by these cells and subsequent facilitated transmission to permissive cells such as hepatocytes and lymphocyte subpopulations. The interaction between E2 and host amino acid transporter complex formed by SLC3A2 and SLC7A5/LAT1 may facilitate viral entry into host cell. Ion channel protein that acts as a viroporin and plays an essential role in the assembly, envelopment and secretion of viral particles. Regulates the host cell secretory pathway, which induces the intracellular retention of viral glycoproteins and favors assembly of viral particles. Creates a pore in acidic organelles and releases Ca(2+) and H(+) in the cytoplasm of infected cells, leading to a productive viral infection. High levels of cytoplasmic Ca(2+) may trigger membrane trafficking and transport of viral ER-associated proteins to viroplasms, sites of viral genome replication. This ionic imbalance induces the assembly of the inflammasome complex, which triggers the maturation of pro-IL-1beta into IL-1beta through the action of caspase-1. Targets also host mitochondria and induces mitochondrial depolarization. In addition of its role as a viroporin, acts as a lipid raft adhesion factor. Its function is as follows. Cysteine protease required for the proteolytic auto-cleavage between the non-structural proteins NS2 and NS3. The N-terminus of NS3 is required for the function of NS2 protease (active region NS2-3). Promotes the initiation of viral particle assembly by mediating the interaction between structural and non-structural proteins. In terms of biological role, displays three enzymatic activities: serine protease with a chymotrypsin-like fold, NTPase and RNA helicase. NS3 serine protease, in association with NS4A, is responsible for the cleavages of NS3-NS4A, NS4A-NS4B, NS4B-NS5A and NS5A-NS5B. The NS3/NS4A complex prevents phosphorylation of host IRF3, thus preventing the establishment of dsRNA induced antiviral state. The NS3/NS4A complex induces host amino acid transporter component SLC3A2, thus contributing to HCV propagation. NS3 RNA helicase binds to RNA and unwinds both dsDNA and dsRNA in the 3' to 5' direction, and likely resolves RNA complicated stable secondary structures in the template strand. Binds a single ATP and catalyzes the unzipping of a single base pair of dsRNA. Inhibits host antiviral proteins TBK1 and IRF3 thereby preventing the establishment of an antiviral state. Cleaves host MAVS/CARDIF thereby preventing the establishment of an antiviral state. Cleaves host TICAM1/TRIF, thereby disrupting TLR3 signaling and preventing the establishment of an antiviral state. Functionally, induces a specific membrane alteration that serves as a scaffold for the virus replication complex. This membrane alteration gives rise to the so-called ER-derived membranous web that contains the replication complex. NS4B self-interaction contributes to its function in membranous web formation. Promotes host TRIF protein degradation in a CASP8-dependent manner thereby inhibiting host TLR3-mediated interferon signaling. Disrupts the interaction between STING and TBK1 contributing to the inhibition of interferon signaling. Phosphorylated protein that is indispensable for viral replication and assembly. Both hypo- and hyperphosphorylated states are required for the viral life cycle. The hyperphosphorylated form of NS5A is an inhibitor of viral replication. Involved in RNA-binding and especially in binding to the viral genome. Zinc is essential for RNA-binding. Participates in the viral particle production as a result of its interaction with the mature viral core protein. Its interaction with host VAPB may target the viral replication complex to vesicles. Down-regulates viral IRES translation initiation. Mediates interferon resistance, presumably by interacting with and inhibiting host EIF2AK2/PKR. Prevents BIN1-induced apoptosis. Acts as a transcriptional activator of some host genes important for viral replication when localized in the nucleus. Via the interaction with host PACSIN2, modulates lipid droplet formation in order to promote virion assembly. Modulates TNFRSF21/DR6 signaling pathway for viral propagation. Its function is as follows. RNA-dependent RNA polymerase that performs primer-template recognition and RNA synthesis during viral replication. Initiates RNA transcription/replication at a flavin adenine dinucleotide (FAD), resulting in a 5'- FAD cap on viral RNAs. In this way, recognition of viral 5' RNA by host pattern recognition receptors can be bypassed, thereby evading activation of antiviral pathways. This Hepatitis C virus genotype 2b (isolate JPUT971017) (HCV) protein is Genome polyprotein.